Consider the following 330-residue polypeptide: D-cysteine desulfhydrase (330 aa).

An N6-(pyridoxal phosphate)lysine modification is found at lysine 52.

It belongs to the ACC deaminase/D-cysteine desulfhydrase family. As to quaternary structure, homodimer. Pyridoxal 5'-phosphate serves as cofactor.

The catalysed reaction is D-cysteine + H2O = hydrogen sulfide + pyruvate + NH4(+) + H(+). In terms of biological role, catalyzes the alpha,beta-elimination reaction of D-cysteine and of several D-cysteine derivatives. It could be a defense mechanism against D-cysteine. The protein is D-cysteine desulfhydrase of Serratia proteamaculans (strain 568).